Reading from the N-terminus, the 240-residue chain is Probable septum site-determining protein MinC (240 aa).

The protein belongs to the MinC family. Interacts with MinD and FtsZ.

Cell division inhibitor that blocks the formation of polar Z ring septums. Rapidly oscillates between the poles of the cell to destabilize FtsZ filaments that have formed before they mature into polar Z rings. Prevents FtsZ polymerization. In Aeromonas hydrophila subsp. hydrophila (strain ATCC 7966 / DSM 30187 / BCRC 13018 / CCUG 14551 / JCM 1027 / KCTC 2358 / NCIMB 9240 / NCTC 8049), this protein is Probable septum site-determining protein MinC.